The sequence spans 328 residues: Nicotianamine synthase 1 (328 aa).

It belongs to the nicotianamine synthase (NAS)-like family. In terms of tissue distribution, in roots but not in leaves.

The catalysed reaction is 3 S-adenosyl-L-methionine = nicotianamine + 3 S-methyl-5'-thioadenosine + 3 H(+). Synthesizes nicotianamine, a polyamine that is the first intermediate in the synthesis of the phytosiderophores of the mugineic acid type found in gramineae which serves as a sensor for the physiological iron status within the plant, and/or might be involved in the transport of iron. The protein is Nicotianamine synthase 1 (NAS1) of Hordeum vulgare (Barley).